The sequence spans 702 residues: MPYSHPLVPLSFMTTALVTTALPYANGPLHLGHLVGYIQADIWVRARRLGGHNTWFVCADDTHGTPIMLAAEKAGMPPEAFIATTQASHERDFAAFNVAFDHYDSTHSPVNRHLTEQSYLTLKQAGHITCRSVAQFYDPAKGMFLPDRYVKGTCPNCGATDQYGDNCEACGATYDPTELKNPYSVISGTTPELRDSEHFFFEVAHFDTFLRHWLSGDVALPSVKNKLKEWLDAKGGLRPWDISRDAPYFGFEIPNQPGKYFYVWLDAPIGYLCSFKTLCTRIGEDFDTHLRSGTTTELHHFIGKDIVNFHALFWPAVLHGTGHRAPTRLHVNGYLTVDGAKMSKSRGTFIMARTYLDAGLEPDALRYYFAAKSSGDVDDLDLNLSDFVARVNADLVGKLVNLASRCASFIGTRFNGQLADTLPDRIQYDQFVAALTPIRDAYERNDTASAIRQTMQLADEANKYIDETKPWIIAKQHNADAQLHAVCTQGLNLFRVLITALKPILPHTSIQAETFLAAPVTAWQDVNQPLIGGHTIHPYSPLFTRIDKKVIEVMINASKDTLAPPPASAKQQNASMSNTAPPPTAEKPETTAPTIGIDDFAKLDLRIGKVLVCEYVEGSDKLLRFELDAGPLGKRQIFSGIRASYSNPETLIGRNVVFIANLAPRKMRFGISQGMILSAGFDSGTLALLDADSSAQPGMPVR.

Residues 23–33 carry the 'HIGH' region motif; it reads PYANGPLHLGH. Cys-154, Cys-157, Cys-167, and Cys-170 together coordinate Zn(2+). Residues 341–345 carry the 'KMSKS' region motif; sequence KMSKS. Lys-344 serves as a coordination point for ATP. A disordered region spans residues 562–593; the sequence is LAPPPASAKQQNASMSNTAPPPTAEKPETTAP. Positions 569 to 578 are enriched in polar residues; the sequence is AKQQNASMSN. One can recognise a tRNA-binding domain in the interval 599–702; that stretch reads DFAKLDLRIG…SSAQPGMPVR (104 aa).

The protein belongs to the class-I aminoacyl-tRNA synthetase family. MetG type 1 subfamily. In terms of assembly, homodimer. Requires Zn(2+) as cofactor.

The protein localises to the cytoplasm. It catalyses the reaction tRNA(Met) + L-methionine + ATP = L-methionyl-tRNA(Met) + AMP + diphosphate. Is required not only for elongation of protein synthesis but also for the initiation of all mRNA translation through initiator tRNA(fMet) aminoacylation. This Xylella fastidiosa (strain 9a5c) protein is Methionine--tRNA ligase.